The following is a 1113-amino-acid chain: Antigenic protein P1 (1113 aa).

The chain crosses the membrane as a helical span at residues Ile7–Val27. Asn121, Asn207, Asn225, Asn233, Asn274, Asn533, Asn576, Asn622, Asn675, Asn679, Asn730, Asn753, Asn880, Asn899, Asn907, Asn972, and Asn995 each carry an N-linked (GlcNAc...) asparagine glycan. A Peptidase M60 domain is found at Val159–Gly473. In terms of domain architecture, PA14 spans Leu648 to Lys800.

It is found in the membrane. The sequence is that of Antigenic protein P1 from Entamoeba histolytica (strain ATCC 30459 / HM-1:IMSS / ABRM).